The following is a 152-amino-acid chain: 6,7-dimethyl-8-ribityllumazine synthase (152 aa).

5-amino-6-(D-ribitylamino)uracil-binding positions include Phe21, 55-57, and 79-81; these read AFE and AVI. 84–85 is a (2S)-2-hydroxy-3-oxobutyl phosphate binding site; it reads AT. His87 (proton donor) is an active-site residue. Residue Phe112 participates in 5-amino-6-(D-ribitylamino)uracil binding. Position 126 (Arg126) interacts with (2S)-2-hydroxy-3-oxobutyl phosphate.

This sequence belongs to the DMRL synthase family. In terms of assembly, forms an icosahedral capsid composed of 60 subunits, arranged as a dodecamer of pentamers.

It carries out the reaction (2S)-2-hydroxy-3-oxobutyl phosphate + 5-amino-6-(D-ribitylamino)uracil = 6,7-dimethyl-8-(1-D-ribityl)lumazine + phosphate + 2 H2O + H(+). Its pathway is cofactor biosynthesis; riboflavin biosynthesis; riboflavin from 2-hydroxy-3-oxobutyl phosphate and 5-amino-6-(D-ribitylamino)uracil: step 1/2. Its function is as follows. Catalyzes the formation of 6,7-dimethyl-8-ribityllumazine by condensation of 5-amino-6-(D-ribitylamino)uracil with 3,4-dihydroxy-2-butanone 4-phosphate. This is the penultimate step in the biosynthesis of riboflavin. This chain is 6,7-dimethyl-8-ribityllumazine synthase, found in Exiguobacterium sibiricum (strain DSM 17290 / CCUG 55495 / CIP 109462 / JCM 13490 / 255-15).